Consider the following 87-residue polypeptide: Small ribosomal subunit protein uS19m (87 aa).

This sequence belongs to the universal ribosomal protein uS19 family.

The protein localises to the mitochondrion. This Dictyostelium citrinum (Slime mold) protein is Small ribosomal subunit protein uS19m (mrps19).